Reading from the N-terminus, the 266-residue chain is Zinc transporter ZupT (266 aa).

8 helical membrane-spanning segments follow: residues 8 to 28 (LLLTLLAGLSTGIGSAMALAV), 36 to 56 (LALSLGFSAGIMLYVSFMEII), 71 to 91 (AGAWVSTISFFGGMLFTWAID), 123 to 143 (GIFTAAAIAIHNFPEGMAVFF), 152 to 172 (GIVIASTIALHNIPEGMAVAV), 185 to 205 (FSLSFLSGLAEPLGALVGYTL), 209 to 229 (FLTPFVLGIVLASVSGIMVYI), and 246 to 266 (LAITGLIAGMAVMALSLLLLT). Residues Asn134 and Glu137 each coordinate Fe(2+). 2 residues coordinate Zn(2+): Glu137 and His162. The Fe(2+) site is built by Asn163, Glu166, and Glu195. Glu166 contributes to the Zn(2+) binding site.

It belongs to the ZIP transporter (TC 2.A.5) family. ZupT subfamily.

It is found in the cell inner membrane. The catalysed reaction is Zn(2+)(in) = Zn(2+)(out). In terms of biological role, mediates zinc uptake. May also transport other divalent cations. This is Zinc transporter ZupT from Chlorobium luteolum (strain DSM 273 / BCRC 81028 / 2530) (Pelodictyon luteolum).